The sequence spans 293 residues: ATP synthase gamma chain (293 aa).

Belongs to the ATPase gamma chain family. In terms of assembly, F-type ATPases have 2 components, CF(1) - the catalytic core - and CF(0) - the membrane proton channel. CF(1) has five subunits: alpha(3), beta(3), gamma(1), delta(1), epsilon(1). CF(0) has three main subunits: a, b and c.

It localises to the cell inner membrane. Its function is as follows. Produces ATP from ADP in the presence of a proton gradient across the membrane. The gamma chain is believed to be important in regulating ATPase activity and the flow of protons through the CF(0) complex. The polypeptide is ATP synthase gamma chain (Chlorobium chlorochromatii (strain CaD3)).